Consider the following 309-residue polypeptide: Glycine--tRNA ligase alpha subunit (309 aa).

The protein belongs to the class-II aminoacyl-tRNA synthetase family. In terms of assembly, tetramer of two alpha and two beta subunits.

It localises to the cytoplasm. It catalyses the reaction tRNA(Gly) + glycine + ATP = glycyl-tRNA(Gly) + AMP + diphosphate. The sequence is that of Glycine--tRNA ligase alpha subunit from Anaeromyxobacter sp. (strain K).